We begin with the raw amino-acid sequence, 256 residues long: MEIIPAIDLLQGSCVRLHQGDYDQVTRFSDDPLAQAQQWVKQGATRLHLVDLDGARSGQPINDQAVRLIAKELSIPVQLGGGVRSLERAEELLSCGLDRVILGTVAIENPELVMELASRHPHKIVVGIDARNGFVATRGWVEESEVEATALAQRLSKAGIAAIISTDIATDGTLAGPNLEALRAMAQASEVPVIASGGVGCMADLLSLLALEPLGVEGVIVGRALYDGRVDLHEAIQAIAEGRLQDPLSDQSRTIA.

Asp8 serves as the catalytic Proton acceptor. Asp129 acts as the Proton donor in catalysis.

The protein belongs to the HisA/HisF family.

It localises to the cytoplasm. It carries out the reaction 1-(5-phospho-beta-D-ribosyl)-5-[(5-phospho-beta-D-ribosylamino)methylideneamino]imidazole-4-carboxamide = 5-[(5-phospho-1-deoxy-D-ribulos-1-ylimino)methylamino]-1-(5-phospho-beta-D-ribosyl)imidazole-4-carboxamide. The protein operates within amino-acid biosynthesis; L-histidine biosynthesis; L-histidine from 5-phospho-alpha-D-ribose 1-diphosphate: step 4/9. The sequence is that of 1-(5-phosphoribosyl)-5-[(5-phosphoribosylamino)methylideneamino] imidazole-4-carboxamide isomerase from Synechococcus sp. (strain CC9311).